A 245-amino-acid chain; its full sequence is Transcriptional regulatory protein VxrB (245 aa).

The Response regulatory domain maps to 31–142 (TLLLVEDDKN…ELFARIRAQL (112 aa)). D78 bears the 4-aspartylphosphate mark. The ompR/PhoB-type DNA-binding region spans 151–245 (DSKVVTSNLT…LRGVGYKMKA (95 aa)).

Post-translationally, phosphorylated by VxrA.

It localises to the cytoplasm. Functionally, member of the two-component regulatory system VxrB/VxrA involved in the regulation of diverses processes, including virulence, the type VI secretion system (T6SS) and biofilm formation. VxrB positively regulates the expression of the T6SS, a virulence nanomachine that directly translocates effectors into bacterial or host cells, thereby facilitating colonization by competing with sister cells and intestinal microbiota. In addition, it activates vpsL expression and biofilm formation, and represses motility. May regulate biofilm formation via its regulation of key biofilm regulators and cyclic di-GMP levels. Significantly contributes to both attack and defense via T6SS, while also influencing competition via regulation of biofilm matrix production. Is critical for colonization in the infant mouse model. In Vibrio cholerae serotype O1 (strain ATCC 39315 / El Tor Inaba N16961), this protein is Transcriptional regulatory protein VxrB.